Reading from the N-terminus, the 396-residue chain is Elongation factor Tu (396 aa).

Residues 10–205 form the tr-type G domain; the sequence is KPHVNIGTIG…AVDESIPDPV (196 aa). Positions 19–26 are G1; it reads GHVDHGKT. GTP is bound at residue 19–26; that stretch reads GHVDHGKT. Residue Thr26 participates in Mg(2+) binding. Residues 62–66 are G2; it reads GITIN. A G3 region spans residues 83–86; it reads DAPG. GTP-binding positions include 83–87 and 138–141; these read DAPGH and NKAD. The segment at 138–141 is G4; the sequence is NKAD. The G5 stretch occupies residues 175–177; it reads SGL.

It belongs to the TRAFAC class translation factor GTPase superfamily. Classic translation factor GTPase family. EF-Tu/EF-1A subfamily. In terms of assembly, monomer.

Its subcellular location is the cytoplasm. The catalysed reaction is GTP + H2O = GDP + phosphate + H(+). Functionally, GTP hydrolase that promotes the GTP-dependent binding of aminoacyl-tRNA to the A-site of ribosomes during protein biosynthesis. This is Elongation factor Tu from Nocardia farcinica (strain IFM 10152).